Consider the following 669-residue polypeptide: tRNA 5-methylaminomethyl-2-thiouridine biosynthesis bifunctional protein MnmC (669 aa).

Residues 1-246 are tRNA (mnm(5)s(2)U34)-methyltransferase; it reads MIKNANIHFN…KRSMLIGTLK (246 aa). The interval 271-669 is FAD-dependent cmnm(5)s(2)U34 oxidoreductase; the sequence is IGGGIASSCI…IVRDLIRNKI (399 aa).

This sequence in the N-terminal section; belongs to the methyltransferase superfamily. tRNA (mnm(5)s(2)U34)-methyltransferase family. The protein in the C-terminal section; belongs to the DAO family. FAD serves as cofactor.

Its subcellular location is the cytoplasm. It catalyses the reaction 5-aminomethyl-2-thiouridine(34) in tRNA + S-adenosyl-L-methionine = 5-methylaminomethyl-2-thiouridine(34) in tRNA + S-adenosyl-L-homocysteine + H(+). Its function is as follows. Catalyzes the last two steps in the biosynthesis of 5-methylaminomethyl-2-thiouridine (mnm(5)s(2)U) at the wobble position (U34) in tRNA. Catalyzes the FAD-dependent demodification of cmnm(5)s(2)U34 to nm(5)s(2)U34, followed by the transfer of a methyl group from S-adenosyl-L-methionine to nm(5)s(2)U34, to form mnm(5)s(2)U34. This is tRNA 5-methylaminomethyl-2-thiouridine biosynthesis bifunctional protein MnmC from Pseudoalteromonas translucida (strain TAC 125).